The primary structure comprises 1255 residues: DNA-directed RNA polymerase subunit beta' (1255 aa).

The Zn(2+) site is built by C68, C70, C83, and C86. 3 residues coordinate Mg(2+): D457, D459, and D461. C803, C885, C892, and C895 together coordinate Zn(2+). A compositionally biased stretch (acidic residues) spans N1220–L1240. A disordered region spans residues N1220 to E1255. Positions D1246–E1255 are enriched in basic and acidic residues.

The protein belongs to the RNA polymerase beta' chain family. In terms of assembly, the RNAP catalytic core consists of 2 alpha, 1 beta, 1 beta' and 1 omega subunit. When a sigma factor is associated with the core the holoenzyme is formed, which can initiate transcription. It depends on Mg(2+) as a cofactor. Zn(2+) serves as cofactor.

It carries out the reaction RNA(n) + a ribonucleoside 5'-triphosphate = RNA(n+1) + diphosphate. In terms of biological role, DNA-dependent RNA polymerase catalyzes the transcription of DNA into RNA using the four ribonucleoside triphosphates as substrates. The polypeptide is DNA-directed RNA polymerase subunit beta' (Lachnoclostridium phytofermentans (strain ATCC 700394 / DSM 18823 / ISDg) (Clostridium phytofermentans)).